A 343-amino-acid polypeptide reads, in one-letter code: Transmembrane protein 120A (343 aa).

The Cytoplasmic portion of the chain corresponds to 1–132 (MQSPPPDPLG…KQAKFAYKDE (132 aa)). Residue K130 coordinates CoA. A helical transmembrane segment spans residues 133–152 (YEKFKLYLTIILIVISFTCR). At 153-158 (FLLNSR) the chain is on the extracellular side. The chain crosses the membrane as a helical span at residues 159-177 (VTDAAFNFLLVWYYCTLTI). Over 178-190 (RESILINNGSRIK) the chain is Cytoplasmic. The CoA site is built by S187 and R188. A helical transmembrane segment spans residues 191–209 (GWWVFHHYVSTFLSGVMLT). Topologically, residues 210–218 (WPDGLMYQK) are extracellular. A helical transmembrane segment spans residues 219-240 (FRNQFLSFSMYQSFVQFLQYYY). 4 residues coordinate CoA: Q237, Y240, Q241, and H283. Residues 241 to 270 (QSGCLYRLRALGERHTMDLTVEGFQSWMWR) lie on the Cytoplasmic side of the membrane. The helical transmembrane segment at 271–294 (GLTFLLPFLFFGHFWQLFNALTLF) threads the bilayer. Over 295 to 304 (NLARDPECKE) the chain is Extracellular. Residues 305–330 (WQVLMCGLPFLLLFLGNFFTTLRVVH) traverse the membrane as a helical segment. The Cytoplasmic segment spans residues 331-343 (QKFHSQQHGSKKD). CoA is bound at residue K332.

This sequence belongs to the TMEM120 family. As to quaternary structure, homodimer. Forms heterooligomer with TMEM120B. Interacts with PKD2; TMEM120A inhibits PKD2 channel activity through the physical association of PKD2 with TMEM120A.

It is found in the cell membrane. Its subcellular location is the nucleus inner membrane. It localises to the endoplasmic reticulum. In terms of biological role, multifunctional protein involved in mechanosensation, and plays an essential role in lipid metabolism and adipocyte differentiation. May function as a potential ion channel involved in sensing mechanical stimuli. Mediates the mechanosensitivity of the PKD2-TMEM120A channel complex through direct physical interaction. TMEM120A seems to affect mechanosensation by inhibiting PIEZO2 channels, possibly by altering cellular lipid content. TMEM120A is structurally similar to a lipid-modifying enzyme, ELOVL7, and contains a bound coenzyme A molecule, which suggests it might function as an enzyme in lipid metabolism. Additionnaly, implicated in innate immune response against Zika virus. Acts as a key activator of the antiviral signaling involving STING1. This is Transmembrane protein 120A from Rattus norvegicus (Rat).